A 283-amino-acid polypeptide reads, in one-letter code: 4-diphosphocytidyl-2-C-methyl-D-erythritol kinase (283 aa).

Residue lysine 10 is part of the active site. Proline 99–serine 109 is an ATP binding site. The active site involves aspartate 141.

It belongs to the GHMP kinase family. IspE subfamily. As to quaternary structure, homodimer.

It carries out the reaction 4-CDP-2-C-methyl-D-erythritol + ATP = 4-CDP-2-C-methyl-D-erythritol 2-phosphate + ADP + H(+). Its pathway is isoprenoid biosynthesis; isopentenyl diphosphate biosynthesis via DXP pathway; isopentenyl diphosphate from 1-deoxy-D-xylulose 5-phosphate: step 3/6. In terms of biological role, catalyzes the phosphorylation of the position 2 hydroxy group of 4-diphosphocytidyl-2C-methyl-D-erythritol. This is 4-diphosphocytidyl-2-C-methyl-D-erythritol kinase from Shigella dysenteriae serotype 1 (strain Sd197).